The primary structure comprises 126 residues: uncharacterized protein (126 aa).

A run of 2 helical transmembrane segments spans residues 21–43 (LIVW…RIFS) and 48–70 (SVTF…LLLL).

The protein resides in the membrane. This is an uncharacterized protein from Saccharomyces cerevisiae (strain ATCC 204508 / S288c) (Baker's yeast).